Here is a 366-residue protein sequence, read N- to C-terminus: Mitogen-activated protein kinase 13 (366 aa).

One can recognise a Protein kinase domain in the interval tyrosine 25–phenylalanine 308. Isoleucine 31–valine 39 provides a ligand contact to ATP. Serine 47 is subject to Phosphoserine. Lysine 54 is a binding site for ATP. The active-site Proton acceptor is the aspartate 150. The residue at position 180 (threonine 180) is a Phosphothreonine; by MAP2K3, MAP2K4, MAP2K6 and MAP2K7. Residues threonine 180–tyrosine 182 carry the TXY motif. Tyrosine 182 carries the phosphotyrosine; by MAP2K3, MAP2K4, MAP2K6 and MAP2K7 modification. Phosphoserine is present on serine 350.

It belongs to the protein kinase superfamily. CMGC Ser/Thr protein kinase family. MAP kinase subfamily. As to quaternary structure, interacts with MAPK8IP2. The cofactor is Mg(2+). Post-translationally, dually phosphorylated on Thr-180 and Tyr-182 by MAP2K3/MKK3, MAP2K4/MKK4, MAP2K6/MKK6 and MAP2K7/MKK7, which activates the enzyme. Dephosphorylated by dual specificity phosphatase DUSP1.

It carries out the reaction L-seryl-[protein] + ATP = O-phospho-L-seryl-[protein] + ADP + H(+). The enzyme catalyses L-threonyl-[protein] + ATP = O-phospho-L-threonyl-[protein] + ADP + H(+). Activated by phosphorylation on threonine and tyrosine by dual specificity kinases, MAP2K3/MKK3 MAP2K6/MKK6, MAP2K4/MKK4 and MAP2K7/MKK7. Activation by ultraviolet radiation, hyperosmotic shock, anisomycin or by TNF-alpha is mediated by MAP2K3/MKK3. Inhibited by dual specificity phosphatase DUSP1. Functionally, serine/threonine kinase which acts as an essential component of the MAP kinase signal transduction pathway. MAPK13 is one of the four p38 MAPKs which play an important role in the cascades of cellular responses evoked by extracellular stimuli such as pro-inflammatory cytokines or physical stress leading to direct activation of transcription factors such as ELK1 and ATF2. Accordingly, p38 MAPKs phosphorylate a broad range of proteins and it has been estimated that they may have approximately 200 to 300 substrates each. MAPK13 is one of the less studied p38 MAPK isoforms. Some of the targets are downstream kinases such as MAPKAPK2, which are activated through phosphorylation and further phosphorylate additional targets. Plays a role in the regulation of protein translation by phosphorylating and inactivating EEF2K. Involved in cytoskeletal remodeling through phosphorylation of MAPT and STMN1. Mediates UV irradiation induced up-regulation of the gene expression of CXCL14. Plays an important role in the regulation of epidermal keratinocyte differentiation, apoptosis and skin tumor development. Phosphorylates the transcriptional activator MYB in response to stress which leads to rapid MYB degradation via a proteasome-dependent pathway. MAPK13 also phosphorylates and down-regulates PRKD1 during regulation of insulin secretion in pancreatic beta cells. The chain is Mitogen-activated protein kinase 13 (MAPK13) from Bos taurus (Bovine).